The primary structure comprises 171 residues: Putative metal-dependent hydrolase BH0277 (171 aa).

Residues His64, His155, and His159 each coordinate Zn(2+).

It belongs to the metal hydrolase YfiT family. Homodimer. Zn(2+) is required as a cofactor.

The protein localises to the cytoplasm. In terms of biological role, possible metal-dependent hydrolase. The polypeptide is Putative metal-dependent hydrolase BH0277 (Halalkalibacterium halodurans (strain ATCC BAA-125 / DSM 18197 / FERM 7344 / JCM 9153 / C-125) (Bacillus halodurans)).